Reading from the N-terminus, the 164-residue chain is Phosphopantetheine adenylyltransferase (164 aa).

Position 9 (Ser-9) interacts with substrate. Residues 9–10 (SF) and His-17 contribute to the ATP site. 3 residues coordinate substrate: Lys-41, Leu-73, and Lys-87. ATP-binding positions include 88 to 90 (GLR), Glu-98, and 123 to 129 (YSYLSSS).

It belongs to the bacterial CoaD family. As to quaternary structure, homohexamer. Requires Mg(2+) as cofactor.

The protein localises to the cytoplasm. It catalyses the reaction (R)-4'-phosphopantetheine + ATP + H(+) = 3'-dephospho-CoA + diphosphate. It participates in cofactor biosynthesis; coenzyme A biosynthesis; CoA from (R)-pantothenate: step 4/5. Its function is as follows. Reversibly transfers an adenylyl group from ATP to 4'-phosphopantetheine, yielding dephospho-CoA (dPCoA) and pyrophosphate. The sequence is that of Phosphopantetheine adenylyltransferase from Clostridium botulinum (strain 657 / Type Ba4).